We begin with the raw amino-acid sequence, 317 residues long: COP9 signalosome complex subunit 6a (317 aa).

One can recognise an MPN domain in the interval T30–V164.

Belongs to the peptidase M67A family. CSN6 subfamily. Component of the CSN complex, probably composed of CSN1, CSN2, CSN3, CSN4, CSN5 (CSN5A or CSN5B), CSN6 (CSN6A or CSN6B), CSN7 and CSN8. Interacts with itself. In the complex, it probably interacts directly with CSN4 and CSN5A or CSN5B. Interacts with CSN7 (via C-terminal tail). Binds to the translation initiation factors TIF3E1.

The protein localises to the cytoplasm. It is found in the nucleus. In terms of biological role, component of the COP9 signalosome complex (CSN), a complex involved in various cellular and developmental processes such as photomorphogenesis and auxin and jasmonate responses. The CSN complex is an essential regulator of the ubiquitin (Ubl) conjugation pathway by mediating the deneddylation of the cullin subunits of SCF-type E3 ligase complexes, leading to decrease the Ubl ligase activity of SCF. It is involved in repression of photomorphogenesis in darkness by regulating the activity of COP1-containing Ubl ligase complexes. The complex is also required for degradation of PSIAA6 by regulating the activity of the Ubl ligase SCF-TIR complex. Essential for the structural integrity of the CSN holocomplex. In Arabidopsis thaliana (Mouse-ear cress), this protein is COP9 signalosome complex subunit 6a.